We begin with the raw amino-acid sequence, 113 residues long: Ig heavy chain V-III region A4 (113 aa).

The 113-residue stretch at 1–113 (EVKLEESGGG…YWGQGTLVTV (113 aa)) folds into the Ig-like domain. A disulfide bond links Cys22 and Cys98.

The sequence is that of Ig heavy chain V-III region A4 from Mus musculus (Mouse).